A 367-amino-acid polypeptide reads, in one-letter code: MNKNKKIVVGMSGGVDSSVTALLLKQQGYDVVGLFMRNWEYGIKGSQCPNRIEFEDAKKVGALIGIEVRGKDFVKEYRDRVFDVFLEGLKQGLTPNPDILCNKEIKFNVFLNEAKSMGADMIATGHYAKIAKYKDHFVLDTPKDNTKDQSYFLHALSSEQLSHAMFPLGDLTKKEVREIARAHNLPVSDKKDSTGICFIGNQKFDEFITQHLQAIPGDILDENGKVIGKHKGLVCYTLGQRKGIGLGGIKGNESENNTHKPWFVASKDVVNNTLTIVQDTNHPLLMSKTVEASHMHWVLEEAPKVGDKLMAQVRYRQQKQACTVVEANEEKVVVEFDNPQRAVTLGQSLVLYSGDYCLGGGFISFYK.

ATP contacts are provided by residues Gly10 to Ser17 and Met36. The interaction with target base in tRNA stretch occupies residues Asn96–Asp98. The Nucleophile role is filled by Cys101. An intrachain disulfide couples Cys101 to Cys197. Residue Gly125 coordinates ATP. Positions Lys147–Gln149 are interaction with tRNA. Cys197 functions as the Cysteine persulfide intermediate in the catalytic mechanism. Positions Arg314 to Tyr315 are interaction with tRNA.

The protein belongs to the MnmA/TRMU family.

Its subcellular location is the cytoplasm. It carries out the reaction S-sulfanyl-L-cysteinyl-[protein] + uridine(34) in tRNA + AH2 + ATP = 2-thiouridine(34) in tRNA + L-cysteinyl-[protein] + A + AMP + diphosphate + H(+). Its function is as follows. Catalyzes the 2-thiolation of uridine at the wobble position (U34) of tRNA, leading to the formation of s(2)U34. In Aliarcobacter butzleri (strain RM4018) (Arcobacter butzleri), this protein is tRNA-specific 2-thiouridylase MnmA 2.